A 238-amino-acid chain; its full sequence is Phosphoribosylaminoimidazole-succinocarboxamide synthase (238 aa).

It belongs to the SAICAR synthetase family.

It catalyses the reaction 5-amino-1-(5-phospho-D-ribosyl)imidazole-4-carboxylate + L-aspartate + ATP = (2S)-2-[5-amino-1-(5-phospho-beta-D-ribosyl)imidazole-4-carboxamido]succinate + ADP + phosphate + 2 H(+). It participates in purine metabolism; IMP biosynthesis via de novo pathway; 5-amino-1-(5-phospho-D-ribosyl)imidazole-4-carboxamide from 5-amino-1-(5-phospho-D-ribosyl)imidazole-4-carboxylate: step 1/2. The polypeptide is Phosphoribosylaminoimidazole-succinocarboxamide synthase (Desulfitobacterium hafniense (strain DSM 10664 / DCB-2)).